The sequence spans 391 residues: Oxytocin receptor (391 aa).

Over 1–38 the chain is Extracellular; sequence MEGAFAANWSAEAVNGSAAPPGTEGNRTAGPPQRNEAL. 3 N-linked (GlcNAc...) asparagine glycosylation sites follow: asparagine 8, asparagine 15, and asparagine 26. A helical membrane pass occupies residues 39 to 63; that stretch reads ARVEVAVLCLILFLALSGNACVLLA. The Cytoplasmic portion of the chain corresponds to 64–74; that stretch reads LRTTRHKHSRL. Residues 75 to 97 form a helical membrane-spanning segment; it reads FFFMKHLSIADLVVAVFQVLPQL. Over 98 to 113 the chain is Extracellular; that stretch reads LWDITFRFYGPDLLCR. Cysteine 112 and cysteine 187 are joined by a disulfide. A helical transmembrane segment spans residues 114–135; the sequence is LVKYLQVVGMFASTYLLLLMSL. The Cytoplasmic segment spans residues 136-154; sequence DRCLAICQPLRSLSRRTDR. A helical membrane pass occupies residues 155–175; it reads LAVLVTWLGCLVASAPQVHIF. The Extracellular segment spans residues 176–202; sequence SLREVADGVFDCWAVFIQPWGPKAYIT. Residues 203 to 225 traverse the membrane as a helical segment; it reads WITLAVYIVPVIVLATCYGLISF. Over 226-277 the chain is Cytoplasmic; sequence KIWQNLRLKTAAAAAEAAAGAEGEAADWAGRAILARVSNVKLISKAKIRTVK. The chain crosses the membrane as a helical span at residues 278 to 296; it reads MTFIVVLAFIVCWTPFFFV. Residues 297-311 are Extracellular-facing; it reads QMWSVWDADAPKEAS. A helical transmembrane segment spans residues 312-334; the sequence is PFIIAMLLASLNSCCNPWIYMLF. Over 335-391 the chain is Cytoplasmic; that stretch reads TGHLFQELVQRFLCCSFRRLKGSRPGETSVSKKSNSSTFVLSQYSSSQRRCSQPSTL. Phosphoserine occurs at positions 368 and 370.

This sequence belongs to the G-protein coupled receptor 1 family. Vasopressin/oxytocin receptor subfamily.

It is found in the cell membrane. Functionally, receptor for oxytocin. The activity of this receptor is mediated by G proteins which activate a phosphatidylinositol-calcium second messenger system. The chain is Oxytocin receptor (OXTR) from Bos taurus (Bovine).